A 545-amino-acid chain; its full sequence is Chaperonin GroEL (545 aa).

ATP contacts are provided by residues 30-33 (TLGP), Lys-51, 87-91 (DGTTT), Gly-415, and Asp-496. Residues 526-545 (PEPKAPAGGMPDMGGMGGMM) form a disordered region. Positions 536-545 (PDMGGMGGMM) are enriched in gly residues.

The protein belongs to the chaperonin (HSP60) family. As to quaternary structure, forms a cylinder of 14 subunits composed of two heptameric rings stacked back-to-back. Interacts with the co-chaperonin GroES.

It is found in the cytoplasm. The catalysed reaction is ATP + H2O + a folded polypeptide = ADP + phosphate + an unfolded polypeptide.. Together with its co-chaperonin GroES, plays an essential role in assisting protein folding. The GroEL-GroES system forms a nano-cage that allows encapsulation of the non-native substrate proteins and provides a physical environment optimized to promote and accelerate protein folding. This chain is Chaperonin GroEL, found in Paracoccus denitrificans (strain Pd 1222).